The chain runs to 534 residues: Prolyl 4-hydroxylase subunit alpha-1 (534 aa).

The signal sequence occupies residues 1-17 (MIWGVLMMGILLPQCSA). Residue Asn-113 is glycosylated (N-linked (GlcNAc...) asparagine). The TPR repeat unit spans residues 205–238 (VSVLDYLSYAVYQQGDLDKALLLTKKLLELDPEH). N-linked (GlcNAc...) asparagine glycosylation is present at Asn-259. Positions 411–519 (TAEELQVANY…KWVSNKWLHE (109 aa)) constitute a Fe2OG dioxygenase domain. The Fe cation site is built by His-429, Asp-431, and His-500. Lys-510 provides a ligand contact to 2-oxoglutarate.

It belongs to the P4HA family. In terms of assembly, heterotetramer of two alpha-1 chains and two beta chains (P4HB)(the beta chain is the multi-functional PDI), where P4HB plays the role of a structural subunit; this tetramer catalyzes the formation of 4-hydroxyproline in collagen. Requires Fe(2+) as cofactor. L-ascorbate serves as cofactor.

Its subcellular location is the endoplasmic reticulum lumen. The catalysed reaction is L-prolyl-[collagen] + 2-oxoglutarate + O2 = trans-4-hydroxy-L-prolyl-[collagen] + succinate + CO2. Catalyzes the post-translational formation of 4-hydroxyproline in -Xaa-Pro-Gly- sequences in collagens and other proteins. This chain is Prolyl 4-hydroxylase subunit alpha-1 (P4ha1), found in Rattus norvegicus (Rat).